The chain runs to 129 residues: Large ribosomal subunit protein bL19 (129 aa).

Belongs to the bacterial ribosomal protein bL19 family.

Its function is as follows. This protein is located at the 30S-50S ribosomal subunit interface and may play a role in the structure and function of the aminoacyl-tRNA binding site. In Granulibacter bethesdensis (strain ATCC BAA-1260 / CGDNIH1), this protein is Large ribosomal subunit protein bL19.